Here is a 92-residue protein sequence, read N- to C-terminus: DNA-directed RNA polymerase subunit Rpo5 (92 aa).

The protein belongs to the archaeal Rpo5/eukaryotic RPB5 RNA polymerase subunit family. Part of the RNA polymerase complex.

The protein localises to the cytoplasm. The catalysed reaction is RNA(n) + a ribonucleoside 5'-triphosphate = RNA(n+1) + diphosphate. Its function is as follows. DNA-dependent RNA polymerase (RNAP) catalyzes the transcription of DNA into RNA using the four ribonucleoside triphosphates as substrates. The protein is DNA-directed RNA polymerase subunit Rpo5 of Methanopyrus kandleri (strain AV19 / DSM 6324 / JCM 9639 / NBRC 100938).